The chain runs to 462 residues: NAD-capped RNA hydrolase NUDT12 (462 aa).

3 ANK repeats span residues 11 to 40 (EIVTQFHCSAAEGDIAKLTGILSHSPSLLN), 45 to 74 (NGWTALMYAARNGHPEIVQFLLEKGCDRSI), and 78 to 98 (SRQTALDIAVFWGYKHIANLL). Residue K185 is modified to N6-succinyllysine. 2 residues coordinate Zn(2+): C284 and C287. K292 is subject to N6-succinyllysine. C302 and C307 together coordinate Zn(2+). Substrate is bound by residues Y318, 354–356 (AGF), E370, E374, and E415. Positions 319–453 (PRVDPVVIMQ…SRAIAHQLIK (135 aa)) constitute a Nudix hydrolase domain. A354, E370, E374, and E415 together coordinate Mg(2+). The short motif at 355–376 (GFIEPGETIEDAVRREVEEESG) is the Nudix box element. The short motif at 460–462 (PNL) is the Microbody targeting signal element.

It belongs to the Nudix hydrolase family. NudC subfamily. In terms of assembly, homodimer. Homodimerization is essential for its catalytic activity and protein stability. Interacts (via ANK repeats) with BLMH. Mg(2+) is required as a cofactor. Requires Zn(2+) as cofactor.

It localises to the cytoplasm. The protein localises to the peroxisome. It is found in the cytoplasmic granule. It carries out the reaction a 5'-end NAD(+)-phospho-ribonucleoside in mRNA + H2O = a 5'-end phospho-adenosine-phospho-ribonucleoside in mRNA + beta-nicotinamide D-ribonucleotide + 2 H(+). It catalyses the reaction NAD(+) + H2O = beta-nicotinamide D-ribonucleotide + AMP + 2 H(+). The catalysed reaction is NADH + H2O = reduced beta-nicotinamide D-ribonucleotide + AMP + 2 H(+). The enzyme catalyses NADPH + H2O = reduced beta-nicotinamide D-ribonucleotide + adenosine 2',5'-bisphosphate + 2 H(+). Functionally, mRNA decapping enzyme that specifically removes the nicotinamide adenine dinucleotide (NAD) cap from a subset of mRNAs by hydrolyzing the diphosphate linkage to produce nicotinamide mononucleotide (NMN) and 5' monophosphate mRNA. The NAD-cap is present at the 5'-end of some RNAs; in contrast to the canonical N7 methylguanosine (m7G) cap, the NAD cap promotes mRNA decay. Preferentially acts on NAD-capped transcripts in response to nutrient stress. Also acts on free nicotinamide adenine dinucleotide molecules: hydrolyzes NAD(H) into NMN(H) and AMP, and NADPH into NMNH and 2',5'-ADP. May act to regulate the concentration of peroxisomal nicotinamide nucleotide cofactors required for oxidative metabolism in this organelle. Regulates the levels of circadian clock components PER1, PER2, PER3 and CRY2 in the liver. This Pongo abelii (Sumatran orangutan) protein is NAD-capped RNA hydrolase NUDT12.